Here is a 252-residue protein sequence, read N- to C-terminus: Phosphate import ATP-binding protein PstB (252 aa).

In terms of domain architecture, ABC transporter spans 6-247 (MSIRDLNFYY…PAQKATEDYI (242 aa)). 38–45 (GPSGCGKS) is a binding site for ATP.

This sequence belongs to the ABC transporter superfamily. Phosphate importer (TC 3.A.1.7) family. In terms of assembly, the complex is composed of two ATP-binding proteins (PstB), two transmembrane proteins (PstC and PstA) and a solute-binding protein (PstS).

It localises to the cell inner membrane. The enzyme catalyses phosphate(out) + ATP + H2O = ADP + 2 phosphate(in) + H(+). In terms of biological role, part of the ABC transporter complex PstSACB involved in phosphate import. Responsible for energy coupling to the transport system. The polypeptide is Phosphate import ATP-binding protein PstB (Psychrobacter cryohalolentis (strain ATCC BAA-1226 / DSM 17306 / VKM B-2378 / K5)).